We begin with the raw amino-acid sequence, 57 residues long: Weak toxin CM-1b (57 aa).

Disulfide bonds link Cys-3–Cys-19, Cys-12–Cys-37, Cys-40–Cys-49, and Cys-50–Cys-55.

This sequence belongs to the three-finger toxin family. Short-chain subfamily. Orphan group XX sub-subfamily. As to expression, expressed by the venom gland.

It localises to the secreted. The sequence is that of Weak toxin CM-1b from Hemachatus haemachatus (Rinkhals).